The sequence spans 1342 residues: DNA-directed RNA polymerase subunit beta (1342 aa).

The protein belongs to the RNA polymerase beta chain family. In terms of assembly, the RNAP catalytic core consists of 2 alpha, 1 beta, 1 beta' and 1 omega subunit. When a sigma factor is associated with the core the holoenzyme is formed, which can initiate transcription.

The enzyme catalyses RNA(n) + a ribonucleoside 5'-triphosphate = RNA(n+1) + diphosphate. Its function is as follows. DNA-dependent RNA polymerase catalyzes the transcription of DNA into RNA using the four ribonucleoside triphosphates as substrates. This is DNA-directed RNA polymerase subunit beta from Klebsiella pneumoniae (strain 342).